Reading from the N-terminus, the 323-residue chain is Lipoyl synthase (323 aa).

Residues 1 to 27 (MVTILDRTSSDEKRIRHPEKAHRPDTE) form a disordered region. Cys-61, Cys-66, Cys-72, Cys-87, Cys-91, Cys-94, and Ser-300 together coordinate [4Fe-4S] cluster. Positions 73 to 289 (WEKKHATFMI…ETVAYAKGFL (217 aa)) constitute a Radical SAM core domain.

It belongs to the radical SAM superfamily. Lipoyl synthase family. Requires [4Fe-4S] cluster as cofactor.

The protein resides in the cytoplasm. It catalyses the reaction [[Fe-S] cluster scaffold protein carrying a second [4Fe-4S](2+) cluster] + N(6)-octanoyl-L-lysyl-[protein] + 2 oxidized [2Fe-2S]-[ferredoxin] + 2 S-adenosyl-L-methionine + 4 H(+) = [[Fe-S] cluster scaffold protein] + N(6)-[(R)-dihydrolipoyl]-L-lysyl-[protein] + 4 Fe(3+) + 2 hydrogen sulfide + 2 5'-deoxyadenosine + 2 L-methionine + 2 reduced [2Fe-2S]-[ferredoxin]. It functions in the pathway protein modification; protein lipoylation via endogenous pathway; protein N(6)-(lipoyl)lysine from octanoyl-[acyl-carrier-protein]: step 2/2. Catalyzes the radical-mediated insertion of two sulfur atoms into the C-6 and C-8 positions of the octanoyl moiety bound to the lipoyl domains of lipoate-dependent enzymes, thereby converting the octanoylated domains into lipoylated derivatives. The sequence is that of Lipoyl synthase from Agrobacterium fabrum (strain C58 / ATCC 33970) (Agrobacterium tumefaciens (strain C58)).